Reading from the N-terminus, the 603-residue chain is Elongation factor 4 (603 aa).

The tr-type G domain occupies 2–184 (NHIRNFSIIA…AVVALIPAPK (183 aa)). GTP-binding positions include 14–19 (DHGKST) and 131–134 (NKMD).

The protein belongs to the TRAFAC class translation factor GTPase superfamily. Classic translation factor GTPase family. LepA subfamily.

It localises to the cell inner membrane. The catalysed reaction is GTP + H2O = GDP + phosphate + H(+). Required for accurate and efficient protein synthesis under certain stress conditions. May act as a fidelity factor of the translation reaction, by catalyzing a one-codon backward translocation of tRNAs on improperly translocated ribosomes. Back-translocation proceeds from a post-translocation (POST) complex to a pre-translocation (PRE) complex, thus giving elongation factor G a second chance to translocate the tRNAs correctly. Binds to ribosomes in a GTP-dependent manner. The sequence is that of Elongation factor 4 from Polaromonas naphthalenivorans (strain CJ2).